The sequence spans 436 residues: Homeobox protein PKNOX1 (436 aa).

Residues 1–20 (MMATQTLSIDSYQDGQQMQV) show a composition bias toward polar residues. Residues 1-49 (MMATQTLSIDSYQDGQQMQVVTELKTEQDPNCSEPDAEGVSPPPVESQT) form a disordered region. Residues serine 33 and serine 41 each carry the phosphoserine modification. The 84-residue stretch at 80 to 163 (GSEGTTSASF…MNSETLLSGE (84 aa)) folds into the MEIS N-terminal domain. Residues 259-321 (SKNKRGVLPK…NARRRILQPM (63 aa)) constitute a DNA-binding region (homeobox; TALE-type). The segment at 401 to 436 (AGQSEDESVDSTEEDAGALAPAHISGLVLENSDSLQ) is disordered. Positions 404-416 (SEDESVDSTEEDA) are enriched in acidic residues.

Belongs to the TALE/MEIS homeobox family. Interacts with MN1. In terms of tissue distribution, ubiquitous. Isoform 2 is expressed in all examined tissues except in bone marrow.

The protein localises to the nucleus. Functionally, activates transcription in the presence of PBX1A and HOXA1. This chain is Homeobox protein PKNOX1, found in Homo sapiens (Human).